We begin with the raw amino-acid sequence, 172 residues long: 3-hydroxydecanoyl-[acyl-carrier-protein] dehydratase (172 aa).

Residue His71 is part of the active site.

Belongs to the thioester dehydratase family. FabA subfamily. As to quaternary structure, homodimer.

It is found in the cytoplasm. It carries out the reaction a (3R)-hydroxyacyl-[ACP] = a (2E)-enoyl-[ACP] + H2O. The catalysed reaction is (3R)-hydroxydecanoyl-[ACP] = (2E)-decenoyl-[ACP] + H2O. The enzyme catalyses (2E)-decenoyl-[ACP] = (3Z)-decenoyl-[ACP]. Its pathway is lipid metabolism; fatty acid biosynthesis. In terms of biological role, necessary for the introduction of cis unsaturation into fatty acids. Catalyzes the dehydration of (3R)-3-hydroxydecanoyl-ACP to E-(2)-decenoyl-ACP and then its isomerization to Z-(3)-decenoyl-ACP. Can catalyze the dehydratase reaction for beta-hydroxyacyl-ACPs with saturated chain lengths up to 16:0, being most active on intermediate chain length. The chain is 3-hydroxydecanoyl-[acyl-carrier-protein] dehydratase from Serratia proteamaculans (strain 568).